The sequence spans 207 residues: Uridine kinase (207 aa).

11–18 serves as a coordination point for ATP; sequence GGSGSGKT.

The protein belongs to the uridine kinase family.

The protein localises to the cytoplasm. It carries out the reaction uridine + ATP = UMP + ADP + H(+). It catalyses the reaction cytidine + ATP = CMP + ADP + H(+). The protein operates within pyrimidine metabolism; CTP biosynthesis via salvage pathway; CTP from cytidine: step 1/3. It functions in the pathway pyrimidine metabolism; UMP biosynthesis via salvage pathway; UMP from uridine: step 1/1. In Staphylococcus aureus (strain Mu3 / ATCC 700698), this protein is Uridine kinase.